The following is a 372-amino-acid chain: Putative 26S proteasome regulatory subunit homolog MTH_1011 (372 aa).

164–171 (GSPGTGKT) contacts ATP.

It belongs to the AAA ATPase family.

In terms of biological role, the 26S proteasome is involved in the ATP-dependent degradation of ubiquitinated proteins. The regulatory (or ATPase) complex confers ATP dependency and substrate specificity to the 26S complex. The sequence is that of Putative 26S proteasome regulatory subunit homolog MTH_1011 from Methanothermobacter thermautotrophicus (strain ATCC 29096 / DSM 1053 / JCM 10044 / NBRC 100330 / Delta H) (Methanobacterium thermoautotrophicum).